An 828-amino-acid chain; its full sequence is Vacuolar transporter chaperone complex subunit 2 (828 aa).

The SPX domain occupies 1–146 (MLFGVKLANE…PKYPSVKSLL (146 aa)). The Cytoplasmic segment spans residues 1–693 (MLFGVKLANE…EAKVWLANER (693 aa)). The important for inositol polyphosphate binding stretch occupies residues 127 to 134 (KIVKKHDK). Phosphoserine occurs at positions 182, 187, 196, 264, 583, 615, and 616. The segment at 580 to 636 (RRLSNLKEPQHQAAVPVSQEENERITSQGDLEADGSSDEETEQEPHSKRSKKVRRRK) is disordered. Residues 610–621 (LEADGSSDEETE) show a composition bias toward acidic residues. Phosphothreonine is present on Thr620. Ser626 is subject to Phosphoserine. Over residues 627–636 (KRSKKVRRRK) the composition is skewed to basic residues. Ser657 is modified (phosphoserine). The helical transmembrane segment at 694–716 (TFNRWLSVTSLLSVLTFSIYNSV) threads the bilayer. Topologically, residues 717–727 (KKAEYPTLANY) are vacuolar. The chain crosses the membrane as a helical span at residues 728–748 (MAYVYFGLTIFCALWSYSIYM). Residues 749-766 (KRVDIIQQRSGQHLDAPL) lie on the Cytoplasmic side of the membrane. The chain crosses the membrane as a helical span at residues 767 to 787 (GPVLVSIVLFVTLVVNFVMAF). The Vacuolar segment spans residues 788–828 (RNAAKSRQELQIQNLEVPERIPEVLRPLQNYLFKLMGPSSD).

Belongs to the VTC2/3 family. In terms of assembly, the VTC core complex is an integral membrane heterooligomer composed of the catalytic subunit VTC4 and the accessory subunits VTC1, VTC2 and VTC3. The complex exists in 2 different sub-complexes: VTC1-VTC2-VCT4 and VCT1-VTC3-VTC4. The VCT1-VTC3-VTC4 subcomplex is mostly found on the vacuolar membrane. The VTC1-VTC2-VCT4 subcomplex is observed in the cell periphery, probably ER and nuclear envelope, but localizes to the vacuole under phosphate starvation. Each subunit contains 3 transmembrane helices. VTC1 is a small membrane protein without hydrophilic domain. VTC2, VTC3 and VTC4 are related and have 2 hydrophilic domains that face the cytosol, an N-terminal SPX domain and the central core domain. The central core in VTC4 is the catalytic domain, with the essential catalytic lysine replaced by isoleucine and leucine in VTC2 and VTC3, respectively. The core complex associates with the accessory subunit VTC5. The complex interacts with the v-SNARE NYV1 and with the V(0) subunit of V-ATPase VPH1.

It is found in the vacuole membrane. Its subcellular location is the cytoplasm. It localises to the cell cortex. The protein localises to the endoplasmic reticulum membrane. The protein resides in the cytoplasmic vesicle. It is found in the autophagosome membrane. In terms of biological role, accessory subunit of the vacuolar transporter chaperone (VTC) complex. The VTC complex acts as a vacuolar polyphosphate polymerase that catalyzes the synthesis of inorganic polyphosphate (polyP) via transfer of phosphate from ATP to a growing polyP chain, releasing ADP. VTC exposes its catalytic domain VTC4 to the cytosol, where the growing polyP chain winds through a tunnel-shaped pocket, integrating cytoplasmic polymer synthesis with polyP membrane translocation. The VTC complex carries 9 vacuolar transmembrane domains, which are likely to constitute the translocation channel into the organelle lumen. PolyP synthesis is tightly coupled to its transport into the vacuole lumen, in order to avoid otherwise toxic intermediates in the cytosol, and it depends on the proton gradient across the membrane, formed by V-ATPase. Binds inositol hexakisphosphate (Ins6P) and similar inositol polyphosphates, such as 5-diphospho-inositol pentakisphosphate (5-InsP7); these are important intracellular signaling molecules. Inositol polyphosphate binding promotes vacuolar polyphosphate synthesis. The VTC complex also plays a role in vacuolar membrane fusion. Required for SEC18/NSF activity in SNARE priming, membrane binding of LMA1 and V(0) trans-complex formation. This Saccharomyces cerevisiae (strain ATCC 204508 / S288c) (Baker's yeast) protein is Vacuolar transporter chaperone complex subunit 2.